We begin with the raw amino-acid sequence, 337 residues long: Large ribosomal subunit protein uL3 (337 aa).

Positions 1–26 (MTRHHQPRKGSVAFSPRKRVARETPR) are disordered.

Belongs to the universal ribosomal protein uL3 family. In terms of assembly, part of the 50S ribosomal subunit. Forms a cluster with proteins L14 and L24e.

In terms of biological role, one of the primary rRNA binding proteins, it binds directly near the 3'-end of the 23S rRNA, where it nucleates assembly of the 50S subunit. The chain is Large ribosomal subunit protein uL3 from Methanosphaera stadtmanae (strain ATCC 43021 / DSM 3091 / JCM 11832 / MCB-3).